The following is a 955-amino-acid chain: 2-oxoglutarate dehydrogenase E1 component (955 aa).

This sequence belongs to the alpha-ketoglutarate dehydrogenase family. As to quaternary structure, homodimer. Part of the 2-oxoglutarate dehydrogenase (OGDH) complex composed of E1 (2-oxoglutarate dehydrogenase), E2 (dihydrolipoamide succinyltransferase) and E3 (dihydrolipoamide dehydrogenase); the complex contains multiple copies of the three enzymatic components (E1, E2 and E3). Thiamine diphosphate serves as cofactor.

It catalyses the reaction N(6)-[(R)-lipoyl]-L-lysyl-[protein] + 2-oxoglutarate + H(+) = N(6)-[(R)-S(8)-succinyldihydrolipoyl]-L-lysyl-[protein] + CO2. Its function is as follows. E1 component of the 2-oxoglutarate dehydrogenase (OGDH) complex which catalyzes the decarboxylation of 2-oxoglutarate, the first step in the conversion of 2-oxoglutarate to succinyl-CoA and CO(2). The sequence is that of 2-oxoglutarate dehydrogenase E1 component from Bacillus cereus (strain ZK / E33L).